The following is an 877-amino-acid chain: TSET complex member tstB (877 aa).

Disordered stretches follow at residues His-398 to Ser-437 and Thr-522 to Ile-557. 2 stretches are compositionally biased toward low complexity: residues Gly-412–Ser-437 and Ser-529–Ser-556.

In terms of assembly, component of the TSET complex, a heterohexamer composed of tstA, tstB, tstC, tstD, tstE and tstF, which may act in plasma membrane turnover. tstA, tstB, tstC and tstD are likely to be the core complex members with tstE and tstF acting as associated scaffold proteins.

The protein is TSET complex member tstB of Dictyostelium discoideum (Social amoeba).